Reading from the N-terminus, the 76-residue chain is Exodeoxyribonuclease 7 small subunit (76 aa).

This sequence belongs to the XseB family. As to quaternary structure, heterooligomer composed of large and small subunits.

Its subcellular location is the cytoplasm. It carries out the reaction Exonucleolytic cleavage in either 5'- to 3'- or 3'- to 5'-direction to yield nucleoside 5'-phosphates.. Bidirectionally degrades single-stranded DNA into large acid-insoluble oligonucleotides, which are then degraded further into small acid-soluble oligonucleotides. This chain is Exodeoxyribonuclease 7 small subunit, found in Geotalea daltonii (strain DSM 22248 / JCM 15807 / FRC-32) (Geobacter daltonii).